We begin with the raw amino-acid sequence, 484 residues long: Glutamate--tRNA ligase (484 aa).

Residues 11–21 carry the 'HIGH' region motif; it reads PSPTGYLHIGN. Positions 252–256 match the 'KMSKS' region motif; the sequence is KLSKR. Residue Lys-255 coordinates ATP.

The protein belongs to the class-I aminoacyl-tRNA synthetase family. Glutamate--tRNA ligase type 1 subfamily. As to quaternary structure, monomer.

It localises to the cytoplasm. It catalyses the reaction tRNA(Glu) + L-glutamate + ATP = L-glutamyl-tRNA(Glu) + AMP + diphosphate. Functionally, catalyzes the attachment of glutamate to tRNA(Glu) in a two-step reaction: glutamate is first activated by ATP to form Glu-AMP and then transferred to the acceptor end of tRNA(Glu). This is Glutamate--tRNA ligase from Staphylococcus aureus (strain MRSA252).